Reading from the N-terminus, the 273-residue chain is DnaJ homolog subfamily C member 27 (273 aa).

A required for interaction with MAPK1 region spans residues 1-18 (MEANMPKRKEPGRSLRIK). GTP is bound by residues 23-30 (GNAEVGKS), 71-75 (DMAGH), and 134-137 (NKID). Positions 217–273 (DSWDMLGVKPGASRDEVNKAYRKLAVLLHPDKCVAPGSEDAFKAVVNARTALLKNIK) constitute a J domain.

This sequence belongs to the small GTPase superfamily. Rab family. Interacts directly with MAPK1 (wild-type and kinase-deficient forms). Interacts directly (in GTP-bound form) with MAP2K1 (wild-type and kinase-deficient forms). In terms of tissue distribution, overexpressed in gastrointestinal cancers; expression correlates with later tumor-node-metastasis stages of colorectal cancers.

It is found in the nucleus. GTPase which can activate the MEK/ERK pathway and induce cell transformation when overexpressed. May act as a nuclear scaffold for MAPK1, probably by association with MAPK1 nuclear export signal leading to enhanced ERK1/ERK2 signaling. The sequence is that of DnaJ homolog subfamily C member 27 (DNAJC27) from Homo sapiens (Human).